The chain runs to 258 residues: Thiazole synthase (258 aa).

Catalysis depends on K100, which acts as the Schiff-base intermediate with DXP. Residues G161, 187–188 (AG), and 209–210 (NT) each bind 1-deoxy-D-xylulose 5-phosphate.

It belongs to the ThiG family. Homotetramer. Forms heterodimers with either ThiH or ThiS.

It is found in the cytoplasm. It catalyses the reaction [ThiS sulfur-carrier protein]-C-terminal-Gly-aminoethanethioate + 2-iminoacetate + 1-deoxy-D-xylulose 5-phosphate = [ThiS sulfur-carrier protein]-C-terminal Gly-Gly + 2-[(2R,5Z)-2-carboxy-4-methylthiazol-5(2H)-ylidene]ethyl phosphate + 2 H2O + H(+). The protein operates within cofactor biosynthesis; thiamine diphosphate biosynthesis. Functionally, catalyzes the rearrangement of 1-deoxy-D-xylulose 5-phosphate (DXP) to produce the thiazole phosphate moiety of thiamine. Sulfur is provided by the thiocarboxylate moiety of the carrier protein ThiS. In vitro, sulfur can be provided by H(2)S. The sequence is that of Thiazole synthase from Campylobacter jejuni subsp. jejuni serotype O:6 (strain 81116 / NCTC 11828).